The chain runs to 133 residues: T-cell receptor beta chain V region 86T1 (133 aa).

The N-terminal stretch at 1-21 (MSCRLLLYVSLCLVETALMNT) is a signal peptide. Residues 22-113 (KITQSPRYLI…SAVYFCASSH (92 aa)) are v segment. Asparagine 36 and asparagine 75 each carry an N-linked (GlcNAc...) asparagine glycan. A disulfide bridge connects residues cysteine 41 and cysteine 109. The tract at residues 114-133 (GQGVSGNTLYFGEGSRLIVV) is j segment.

The polypeptide is T-cell receptor beta chain V region 86T1 (Mus musculus (Mouse)).